We begin with the raw amino-acid sequence, 203 residues long: Glycerol-3-phosphate acyltransferase (203 aa).

A run of 4 helical transmembrane segments spans residues L4–I24, I68–I88, G104–S124, and F125–I145.

Belongs to the PlsY family. In terms of assembly, probably interacts with PlsX.

It localises to the cell inner membrane. It catalyses the reaction an acyl phosphate + sn-glycerol 3-phosphate = a 1-acyl-sn-glycero-3-phosphate + phosphate. It participates in lipid metabolism; phospholipid metabolism. Its function is as follows. Catalyzes the transfer of an acyl group from acyl-phosphate (acyl-PO(4)) to glycerol-3-phosphate (G3P) to form lysophosphatidic acid (LPA). This enzyme utilizes acyl-phosphate as fatty acyl donor, but not acyl-CoA or acyl-ACP. This is Glycerol-3-phosphate acyltransferase from Tolumonas auensis (strain DSM 9187 / NBRC 110442 / TA 4).